A 378-amino-acid chain; its full sequence is Cytochrome b (378 aa).

Transmembrane regions (helical) follow at residues 33-53, 77-98, 113-133, and 178-198; these read FGSL…FLAM, WMIR…FLHT, WNIG…GYVL, and FFTF…IHLL. The heme b site is built by His83 and His97. 2 residues coordinate heme b: His182 and His196. His201 is a binding site for a ubiquinone. The next 4 membrane-spanning stretches (helical) occupy residues 226 to 246, 288 to 308, 320 to 340, and 347 to 366; these read TKDI…TLFT, LGGV…PATH, ITQI…WIGG, and FEAI…TLIP.

This sequence belongs to the cytochrome b family. In terms of assembly, the cytochrome bc1 complex contains 11 subunits: 3 respiratory subunits (MT-CYB, CYC1 and UQCRFS1), 2 core proteins (UQCRC1 and UQCRC2) and 6 low-molecular weight proteins (UQCRH/QCR6, UQCRB/QCR7, UQCRQ/QCR8, UQCR10/QCR9, UQCR11/QCR10 and a cleavage product of UQCRFS1). This cytochrome bc1 complex then forms a dimer. The cofactor is heme b.

The protein resides in the mitochondrion inner membrane. Component of the ubiquinol-cytochrome c reductase complex (complex III or cytochrome b-c1 complex) that is part of the mitochondrial respiratory chain. The b-c1 complex mediates electron transfer from ubiquinol to cytochrome c. Contributes to the generation of a proton gradient across the mitochondrial membrane that is then used for ATP synthesis. In Cebus albifrons (White-fronted capuchin), this protein is Cytochrome b (MT-CYB).